The following is a 501-amino-acid chain: MAINAQEISALIKKQIEDFQPNFDVTETGIVTYIGDGIARARGLDNAMSGELLEFSNGAYGMAQNLESNDVGIIILGDFSEIREGDVVKRTGKIMEVPVGEAMIGRVVNPLGQPVDGLGEIETTATRPVETPAPGVMQRKSVFEPLQTGLKAIDALVPIGRGQRELIIGDRQTGKTSVAIDAILNQKGQDMICIYVAIGQKESTVRTQVETLRKYGALDYTIVVTASASQPSPLLFIAPYAGVAMAEEFMYNGKHVLIVYDDLSKQAVAYRELSLLLRRPPGREAYPGDVFYLHSRLLERSAKVSDALGGGSITALPFIETQAGDISAYIATNVISITDGQIFLQENLFNSGIRPAIDAGSSVSRVGGAAQIKAMKRVAGTLRLDLASYRELEAFTQFGSDLDAATQAKLNRGRRTVEVLKQPLHKPLPVEKQVVILYALTHGFLDDVPVNDILAFEEALYDYFDAHYDNLFETIRTTKDLPEEAELDAAIQAFKDQSQFK.

169–176 provides a ligand contact to ATP; that stretch reads GDRQTGKT.

It belongs to the ATPase alpha/beta chains family. In terms of assembly, F-type ATPases have 2 components, CF(1) - the catalytic core - and CF(0) - the membrane proton channel. CF(1) has five subunits: alpha(3), beta(3), gamma(1), delta(1), epsilon(1). CF(0) has three main subunits: a(1), b(2) and c(9-12). The alpha and beta chains form an alternating ring which encloses part of the gamma chain. CF(1) is attached to CF(0) by a central stalk formed by the gamma and epsilon chains, while a peripheral stalk is formed by the delta and b chains.

It is found in the cell membrane. It carries out the reaction ATP + H2O + 4 H(+)(in) = ADP + phosphate + 5 H(+)(out). Functionally, produces ATP from ADP in the presence of a proton gradient across the membrane. The alpha chain is a regulatory subunit. In Streptococcus agalactiae serotype Ia (strain ATCC 27591 / A909 / CDC SS700), this protein is ATP synthase subunit alpha.